A 168-amino-acid polypeptide reads, in one-letter code: MSRLVLLISLVIVVASAAAPQCEVCKKVLDDVMAKVPAGDKSKPDAIGKVIREHCETTRNKENKFCFYIGALPESATSIMNEVTKPLSWSMPTEKVCLEKLKGKDAQICELKYDKPLDWKTIDLKKMRVKELKNILGEWGEVCKGCTEKAELIKRIEELKPKYVKEEL.

The first 17 residues, 1–17 (MSRLVLLISLVIVVASA), serve as a signal peptide directing secretion. Cystine bridges form between cysteine 22–cysteine 109, cysteine 25–cysteine 97, cysteine 55–cysteine 66, and cysteine 143–cysteine 146.

This sequence belongs to the ARMET family. As to expression, expressed in the intestine, spermatheca and nervous system. Expressed in the hypoderm. Expressed in structures of the excretory system. Not expressed in the male gonad.

It is found in the secreted. The protein resides in the endoplasmic reticulum lumen. Its function is as follows. Inhibits endoplasmic reticulum (ER) stress response. Retained in the ER under normal conditions and is up-regulated and secreted by the ER in response to ER stress and hypoxia. Following secretion by the ER, directly binds to 3-O-sulfogalactosylceramide, a lipid sulfatide in the outer cell membrane of target cells. Sulfatide binding promotes its cellular uptake by endocytosis, and is required for its role in alleviating ER stress under ER stress conditions. Has a neuroprotective role, ensuring survival of dopaminergic neurons during normal growth. The sequence is that of Mesencephalic astrocyte-derived neurotrophic factor homolog from Caenorhabditis elegans.